We begin with the raw amino-acid sequence, 296 residues long: 4-diphosphocytidyl-2-C-methyl-D-erythritol kinase (296 aa).

The active site involves Lys-18. 102–112 (PMGGGIGGGSS) contacts ATP. The active site involves Asp-144.

This sequence belongs to the GHMP kinase family. IspE subfamily.

The enzyme catalyses 4-CDP-2-C-methyl-D-erythritol + ATP = 4-CDP-2-C-methyl-D-erythritol 2-phosphate + ADP + H(+). It participates in isoprenoid biosynthesis; isopentenyl diphosphate biosynthesis via DXP pathway; isopentenyl diphosphate from 1-deoxy-D-xylulose 5-phosphate: step 3/6. Its function is as follows. Catalyzes the phosphorylation of the position 2 hydroxy group of 4-diphosphocytidyl-2C-methyl-D-erythritol. The polypeptide is 4-diphosphocytidyl-2-C-methyl-D-erythritol kinase (Vibrio atlanticus (strain LGP32) (Vibrio splendidus (strain Mel32))).